The following is a 105-amino-acid chain: Large ribosomal subunit protein eL42z/eL42y (105 aa).

Residues 28 to 57 (YKKGKDSLAAQGKRRYDRKQSGYGGQTKPV) are disordered.

It belongs to the eukaryotic ribosomal protein eL42 family.

In Arabidopsis thaliana (Mouse-ear cress), this protein is Large ribosomal subunit protein eL42z/eL42y (RPL36AA).